The chain runs to 364 residues: DNA replication and repair protein RecF (364 aa).

Residue 30–37 (GNNAQGKT) participates in ATP binding.

Belongs to the RecF family.

Its subcellular location is the cytoplasm. In terms of biological role, the RecF protein is involved in DNA metabolism; it is required for DNA replication and normal SOS inducibility. RecF binds preferentially to single-stranded, linear DNA. It also seems to bind ATP. This chain is DNA replication and repair protein RecF, found in Clostridium botulinum (strain Okra / Type B1).